The following is an 85-amino-acid chain: MKVLVFAIVCSVLLQVVLSADEEARECIPTKHDCTNDRKNCCPGHECKCYNTQIGGSKKEQCGCKKSLLAKAKNFGGKVITIFKA.

Positions 1–19 (MKVLVFAIVCSVLLQVVLS) are cleaved as a signal peptide. The propeptide at 20–25 (ADEEAR) is removed in mature form. Residues 22-25 (EEAR) carry the Processing quadruplet motif motif. 4 disulfide bridges follow: C27-C42, C34-C47, C41-C64, and C49-C62.

It belongs to the neurotoxin 19 (CSTX) family. Post-translationally, contains 4 disulfide bonds. Cleavage of the propeptide depends on the processing quadruplet motif (XXXR, with at least one of X being E). Expressed by the venom gland.

It localises to the secreted. Its function is as follows. Insect toxin. Causes paralysis in larvae of C.vicina by depolarizing membranes at the neuromuscular junction. This chain is Latartoxin-1a, found in Lachesana tarabaevi (Spider).